Reading from the N-terminus, the 313-residue chain is N-acetyl-gamma-glutamyl-phosphate reductase (313 aa).

The active site involves Cys117.

The protein belongs to the NAGSA dehydrogenase family. Type 2 subfamily.

The protein resides in the cytoplasm. It catalyses the reaction N-acetyl-L-glutamate 5-semialdehyde + phosphate + NADP(+) = N-acetyl-L-glutamyl 5-phosphate + NADPH + H(+). Its pathway is amino-acid biosynthesis; L-arginine biosynthesis; N(2)-acetyl-L-ornithine from L-glutamate: step 3/4. Functionally, catalyzes the NADPH-dependent reduction of N-acetyl-5-glutamyl phosphate to yield N-acetyl-L-glutamate 5-semialdehyde. In Burkholderia cenocepacia (strain HI2424), this protein is N-acetyl-gamma-glutamyl-phosphate reductase.